The chain runs to 325 residues: SAM pointed domain-containing Ets transcription factor (325 aa).

Disordered regions lie at residues 27–50 (GTEK…PPAT) and 79–100 (ARAG…SQAS). The PNT domain maps to 119 to 203 (EVLKDIETAC…AHLDIWKSAA (85 aa)). Positions 239-322 (IHLWQFLKEL…ISQRLVYQFV (84 aa)) form a DNA-binding region, ETS.

It belongs to the ETS family. As to quaternary structure, interacts with the DNA-binding domain of the androgen receptor. Interacts with NKX3-1. As to expression, expressed in the accessory glands of sex organs including the prostate, seminal vesicle, coagulating gland in males, the oviduct in females, and in intestines. Expression is epithelial-specific.

It localises to the nucleus. In terms of biological role, may function as an androgen-independent transactivator of the prostate-specific antigen (PSA) promoter. Binds to 5'-GGAT-3' DNA sequences. May play a role in the regulation of the prostate gland and/or prostate cancer development. Acts as a transcriptional activator for SERPINB5 promoter. The polypeptide is SAM pointed domain-containing Ets transcription factor (Spdef) (Mus musculus (Mouse)).